The following is a 321-amino-acid chain: uncharacterized protein (321 aa).

Positions Met-1 to Phe-80 are disordered.

This is an uncharacterized protein from Mus musculus (Mouse).